Consider the following 1331-residue polypeptide: MVEVSEKPNTQDDGVSKQENRNPASSSSSTSDKEKVAKKGNSDATKSSTPEDLDAQLAHLPEHEREILKQQLFIPDVKATYGTLFRYATRNDMIFLAIVSLASIAAGAALPLFTVLFGSLAGTFRDIALHRITYDEFNSILTRNSLYFVYLGIAQFILLYVSTVGFIYVGEHITQKIRAKYLHAILRQNIGFFDKLGAGEVTTRITADTNLIQDGISEKVGLTLTALSTFFSAFIIGYVRYWKLALICSSTIVAMILVMGGISRFVVKSGRMTLVSYGEGGTVAEEVISSIRNATAFGTQEKLARQYEVHLKEARKWGRRLQMMLGIMFGSMMAIMYSNYGLGFWMGSRFLVGGETDLSAIVNILLAIVIGSFSIGNVAPNTQAFASAISAGAKIFSTIDRVSAIDPGSDEGDTIENVEGTIEFRGIKHIYPSRPEVVVMEDINLVVPKGKTTALVGPSGSGKSTVVGLLERFYNPVSGSVLLDGRDIKTLNLRWLRQQISLVSQEPTLFGTTIFENIRLGLIGSPMENESEEQIKERIVSAAKEANAHDFIMGLPDGYATDVGQRGFLLSGGQKQRIAIARAIVSDPKILLLDEATSALDTKSEGVVQAALDAASRGRTTIVIAHRLSTIKSADNIVVIVGGRIAEQGTHDELVDKKGTYLQLVEAQKINEERGEESEDEAVLEKEKEISRQISVPAKSVNSGKYPDEDVEANLGRIDTKKSLSSVILSQKRSQENETEYSLGTLIRFIAGFNKPERLIMLCGFFFAVLSGAGQPVQSVFFAKGITTLSLPPSLYGKLREDANFWSLMFLMLGLVQLVTQSAQGVIFAICSESLIYRARSKSFRAMLRQDIAFFDLPENSTGALTSFLSTETKHLSGVSGATLGTILMVSTTLIVALTVALAFGWKLALVCISTVPVLLLCGFYRFWILAQFQTRAKKAYESSASYACEATSSIRTVASLTREQGVMEIYEGQLNDQAKKSLRSVAKSSLLYAASQSFSFFCLALGFWYGGGLLGKGEYNAFQFFLCISCVIFGSQSAGIVFSFSPDMGKAKSAAADFKRLFDRVPTIDIESPDGEKLETVEGTIEFRDVHFRYPTRPEQPVLRGLNLTVKPGQYIALVGPSGCGKSTTIALVERFYDTLSGGVYIDGKDISRLNVNSYRSHLALVSQEPTLYQGTIRDNVLLGVDRDELPDEQVFAACKAANIYDFIMSLPDGFGTVVGSKGSMLSGGQKQRIAIARALIRDPKVLLLDEATSALDSESEKVVQAALDAAAKGRTTIAVAHRLSTIQKADIIYVFDQGRIVESGTHHELLQNKGRYYELVHMQSLEKTQ.

2 stretches are compositionally biased toward basic and acidic residues: residues 1–20 (MVEV…KQEN) and 31–41 (SDKEKVAKKGN). Residues 1–51 (MVEVSEKPNTQDDGVSKQENRNPASSSSSTSDKEKVAKKGNSDATKSSTPE) form a disordered region. Helical transmembrane passes span 93 to 113 (MIFL…LPLF), 147 to 167 (YFVY…VGFI), 219 to 239 (KVGL…IGYV), and 242 to 262 (WKLA…MGGI). Positions 97 to 387 (AIVSLASIAA…VAPNTQAFAS (291 aa)) constitute an ABC transmembrane type-1 1 domain. Residue asparagine 293 is glycosylated (N-linked (GlcNAc...) asparagine). 2 helical membrane-spanning segments follow: residues 325–345 (LGIM…LGFW) and 358–378 (LSAI…IGNV). The 246-residue stretch at 422–667 (IEFRGIKHIY…KGTYLQLVEA (246 aa)) folds into the ABC transporter 1 domain. Position 457–464 (457–464 (GPSGSGKS)) interacts with ATP. N-linked (GlcNAc...) asparagine glycosylation is found at asparagine 529 and asparagine 737. Transmembrane regions (helical) follow at residues 762 to 782 (LCGF…SVFF) and 810 to 830 (FLML…IFAI). Residues 764 to 1051 (GFFFAVLSGA…VFSFSPDMGK (288 aa)) enclose the ABC transmembrane type-1 2 domain. N-linked (GlcNAc...) asparagine glycosylation is present at asparagine 860. Transmembrane regions (helical) follow at residues 884-904 (LGTI…ALAF), 910-930 (LVCI…FWIL), 995-1015 (ASQS…GGLL), and 1025-1045 (FFLC…VFSF). The ABC transporter 2 domain occupies 1086 to 1324 (IEFRDVHFRY…KGRYYELVHM (239 aa)). Residue asparagine 1108 is glycosylated (N-linked (GlcNAc...) asparagine). 1121–1128 (GPSGCGKS) provides a ligand contact to ATP.

It belongs to the ABC transporter superfamily. ABCB family. Multidrug resistance exporter (TC 3.A.1.201) subfamily.

Its subcellular location is the cell membrane. The enzyme catalyses itraconazole(in) + ATP + H2O = itraconazole(out) + ADP + phosphate + H(+). Pleiotropic ABC efflux transporter that may be involved in the modulation susceptibility to a wide range of unrelated cytotoxic compounds. The chain is ABC multidrug transporter MDR2 from Trichophyton equinum (strain ATCC MYA-4606 / CBS 127.97) (Horse ringworm fungus).